A 638-amino-acid polypeptide reads, in one-letter code: Probable inactive receptor kinase At4g23740 (638 aa).

The N-terminal stretch at 1–24 (MEALRIYLWSLCLSLCLIIYGANS) is a signal peptide. LRR repeat units follow at residues 94–117 (ALRVLSLRSNLISGEFPKDFVELK), 118–139 (DLAFLYLQDNNLSGPLPLDFSV), 142–165 (NLTSVNLSNNGFNGTIPSSLSRLK), 166–188 (RIQSLNLANNTLSGDIPDLSVLS), and 189–198 (SLQHIDLSNN). A helical membrane pass occupies residues 257 to 277 (VFLLIVIAVSIVVITALAFVL). Positions 337-608 (RASAEVLGKG…SDLVRLIENV (272 aa)) constitute a Protein kinase domain. At S339 the chain carries Phosphoserine. 343-351 (LGKGTFGTT) contributes to the ATP binding site. T360 bears the Phosphothreonine mark. K365 contributes to the ATP binding site. Phosphoserine occurs at positions 416 and 419. Phosphothreonine is present on residues T436 and T509. The residue at position 513 (S513) is a Phosphoserine. Residues 612-638 (RTSIEPEPELKPKSENGASETSTPSEI) are disordered. Basic and acidic residues predominate over residues 613-625 (TSIEPEPELKPKS). The span at 627 to 638 (NGASETSTPSEI) shows a compositional bias: polar residues.

It belongs to the protein kinase superfamily.

It is found in the membrane. In Arabidopsis thaliana (Mouse-ear cress), this protein is Probable inactive receptor kinase At4g23740.